Consider the following 82-residue polypeptide: Cytotoxin 6 (82 aa).

Positions 1–21 are cleaved as a signal peptide; it reads MKTLLLTLVVVTIVCLDLGYT. Cystine bridges form between Cys-24/Cys-42, Cys-35/Cys-59, Cys-63/Cys-74, and Cys-75/Cys-80.

Belongs to the three-finger toxin family. Short-chain subfamily. Type IA cytotoxin sub-subfamily. Monomer in solution; Homodimer and oligomer in the presence of negatively charged lipids forming a pore with a size ranging between 20 and 30 Angstroms. Expressed by the venom gland.

Its subcellular location is the secreted. The protein localises to the target cell membrane. Functionally, shows cytolytic activity on many different cells by forming pore in lipid membranes. In vivo, increases heart rate or kills the animal by cardiac arrest. In addition, it binds to heparin with high affinity, interacts with Kv channel-interacting protein 1 (KCNIP1) in a calcium-independent manner, and binds to integrin alpha-V/beta-3 (ITGAV/ITGB3) with moderate affinity. The polypeptide is Cytotoxin 6 (Naja atra (Chinese cobra)).